A 576-amino-acid polypeptide reads, in one-letter code: Mitogen-activated protein kinase 15 (576 aa).

Positions Arg-20 to Lys-50 are disordered. The segment covering Asn-28–Pro-42 has biased composition (polar residues). Residues Tyr-90–Phe-381 enclose the Protein kinase domain. ATP contacts are provided by residues Val-96 to Val-104 and Lys-119. Catalysis depends on Asp-216, which acts as the Proton acceptor. Thr-252 bears the Phosphothreonine mark. A TXY motif is present at residues Thr-252–Tyr-254. At Tyr-254 the chain carries Phosphotyrosine. Thr-257 carries the post-translational modification Phosphothreonine. A disordered region spans residues Glu-458–Met-535. A compositionally biased stretch (basic and acidic residues) spans Leu-477–Thr-501. The segment covering Ala-504 to Gly-520 has biased composition (polar residues).

This sequence belongs to the protein kinase superfamily. CMGC Ser/Thr protein kinase family. MAP kinase subfamily. In terms of assembly, interacts with MKK7. Dually phosphorylated on Thr-252 and Tyr-254, which activates the enzyme.

The catalysed reaction is L-seryl-[protein] + ATP = O-phospho-L-seryl-[protein] + ADP + H(+). It carries out the reaction L-threonyl-[protein] + ATP = O-phospho-L-threonyl-[protein] + ADP + H(+). Its activity is regulated as follows. Activated by threonine and tyrosine phosphorylation. The sequence is that of Mitogen-activated protein kinase 15 (MPK15) from Arabidopsis thaliana (Mouse-ear cress).